Here is a 105-residue protein sequence, read N- to C-terminus: Sulfite reductase, dissimilatory-type subunit gamma (105 aa).

This sequence belongs to the DsrC/TusE family. Heterohexamer of two alpha, two beta and two gamma subunits.

Its subcellular location is the cytoplasm. The catalysed reaction is [DsrC protein]-trisulfide + NAD(+) + 3 H2O = [DsrC protein]-dithiol + sulfite + NADH + 3 H(+). In terms of biological role, catalyzes the reduction of sulfite to sulfide. This is the terminal oxidation reaction in sulfate respiration, a process catalyzed by the sulfate-reducing bacteria. This is Sulfite reductase, dissimilatory-type subunit gamma (dsvC) from Nitratidesulfovibrio vulgaris (strain ATCC 29579 / DSM 644 / CCUG 34227 / NCIMB 8303 / VKM B-1760 / Hildenborough) (Desulfovibrio vulgaris).